We begin with the raw amino-acid sequence, 455 residues long: Rho GTPase-activating protein 3 (455 aa).

The segment covering 1 to 12 has biased composition (polar residues); sequence MTNFSRSKSTGT. A disordered region spans residues 1-68; that stretch reads MTNFSRSKST…HASRSGNGSG (68 aa). Residues 24–33 are compositionally biased toward basic and acidic residues; it reads GPDKYENIHN. A compositionally biased stretch (low complexity) spans 43–54; that stretch reads STTSTDYYDAST. Residues 55 to 64 show a composition bias toward polar residues; sequence PLSSHASRSG. Residues 105-118 enclose the CRIB domain; that stretch reads IGWPTEVKHVSHVT. A Rho-GAP domain is found at 153–331; it reads KSMQCSYDDR…LILMNLKERE (179 aa). 2 disordered regions span residues 342–366 and 432–455; these read KQTS…KPNN and FVSN…SLPW. Residues 435 to 446 show a composition bias toward basic and acidic residues; that stretch reads NRDEGRKGREAW.

As to expression, expressed in differentiating xylem cells.

Its subcellular location is the cell membrane. Its function is as follows. Acts as a GTPase activator for the Rac-type GTPase by converting it to an inactive GDP-bound state. Involved in secondary wall pattern formation. In association with ROPGEF4, mediates local activation of ARAC10/ROP11 to initiate the distinct pattern of secondary cell walls in xylem cells. This Arabidopsis thaliana (Mouse-ear cress) protein is Rho GTPase-activating protein 3 (ROPGAP3).